The primary structure comprises 130 residues: Small ribosomal subunit protein uS11 (130 aa).

It belongs to the universal ribosomal protein uS11 family. As to quaternary structure, part of the 30S ribosomal subunit. Interacts with proteins S7 and S18. Binds to IF-3.

Functionally, located on the platform of the 30S subunit, it bridges several disparate RNA helices of the 16S rRNA. Forms part of the Shine-Dalgarno cleft in the 70S ribosome. The sequence is that of Small ribosomal subunit protein uS11 from Caldicellulosiruptor bescii (strain ATCC BAA-1888 / DSM 6725 / KCTC 15123 / Z-1320) (Anaerocellum thermophilum).